Here is a 311-residue protein sequence, read N- to C-terminus: Tryptophan 2,3-dioxygenase (311 aa).

Residues 1–37 (MQPPGGDAPAGCPFSGARAAQPAQAAHEAPHVPGEAD) form a disordered region. Positions 17-27 (ARAAQPAQAAH) are enriched in low complexity. Residues 80–84 (FIIQH), Tyr142, and Arg146 contribute to the substrate site. A heme-binding site is contributed by His269. Thr283 contributes to the substrate binding site.

Belongs to the tryptophan 2,3-dioxygenase family. Homotetramer. Heme is required as a cofactor.

It catalyses the reaction L-tryptophan + O2 = N-formyl-L-kynurenine. Its pathway is amino-acid degradation; L-tryptophan degradation via kynurenine pathway; L-kynurenine from L-tryptophan: step 1/2. In terms of biological role, heme-dependent dioxygenase that catalyzes the oxidative cleavage of the L-tryptophan (L-Trp) pyrrole ring and converts L-tryptophan to N-formyl-L-kynurenine. Catalyzes the oxidative cleavage of the indole moiety. The protein is Tryptophan 2,3-dioxygenase of Burkholderia orbicola (strain MC0-3).